The sequence spans 311 residues: Dehydrogenase/reductase SDR family member 7C (311 aa).

Residues 1–18 (MGVTAVLMLPLLLLGISG) form the signal peptide. Residues Ser47, Leu49, Tyr191, Lys195, and Ser226 each coordinate NAD(+). Catalysis depends on Tyr191, which acts as the Proton acceptor.

Belongs to the short-chain dehydrogenases/reductases (SDR) family.

It is found in the sarcoplasmic reticulum membrane. The enzyme catalyses all-trans-retinol + NAD(+) = all-trans-retinal + NADH + H(+). Its function is as follows. NADH-dependent oxidoreductase which catalyzes the oxidation of all-trans-retinol to all-trans-retinal. Plays a role in the regulation of cardiac and skeletal muscle metabolic functions. Maintains Ca(2+) intracellular homeostasis by repressing Ca(2+) release from the sarcoplasmic reticulum (SR) in myotubes, possibly through local alternations in NAD/NADH or retinol/retinal. Also plays a role in Ca(2+) homeostasis by controlling Ca(2+) overload in the cytosol and the SR in myotubes. Involved in glucose uptake into skeletal muscles and muscle performance by activating PI3K and mTORC2-mediated AKT1 phosphorylation signaling pathways, possibly through the action of its downstream catalytic product all-trans-retinoic acid. In Bos taurus (Bovine), this protein is Dehydrogenase/reductase SDR family member 7C (DHRS7C).